The sequence spans 148 residues: Probable glycine cleavage system H protein 2 (148 aa).

One can recognise a Lipoyl-binding domain in the interval 32 to 114 (TIVVGITDLA…YGKGWLVKMK (83 aa)). Residue lysine 73 is modified to N6-lipoyllysine.

The protein belongs to the GcvH family. The glycine cleavage system is composed of four proteins: P, T, L and H. (R)-lipoate serves as cofactor.

The glycine cleavage system catalyzes the degradation of glycine. The H protein shuttles the methylamine group of glycine from the P protein to the T protein. The polypeptide is Probable glycine cleavage system H protein 2 (Saccharolobus solfataricus (strain ATCC 35092 / DSM 1617 / JCM 11322 / P2) (Sulfolobus solfataricus)).